Reading from the N-terminus, the 434-residue chain is D-amino acid dehydrogenase (434 aa).

3–17 provides a ligand contact to FAD; sequence VLVLGSGVIGTTSAW.

Belongs to the DadA oxidoreductase family. Requires FAD as cofactor.

The catalysed reaction is a D-alpha-amino acid + A + H2O = a 2-oxocarboxylate + AH2 + NH4(+). The protein operates within amino-acid degradation; D-alanine degradation; NH(3) and pyruvate from D-alanine: step 1/1. Functionally, oxidative deamination of D-amino acids. This Stenotrophomonas maltophilia (strain K279a) protein is D-amino acid dehydrogenase.